Reading from the N-terminus, the 101-residue chain is Co-chaperonin GroES (101 aa).

Belongs to the GroES chaperonin family. In terms of assembly, heptamer of 7 subunits arranged in a ring. Interacts with the chaperonin GroEL.

Its subcellular location is the cytoplasm. Functionally, together with the chaperonin GroEL, plays an essential role in assisting protein folding. The GroEL-GroES system forms a nano-cage that allows encapsulation of the non-native substrate proteins and provides a physical environment optimized to promote and accelerate protein folding. GroES binds to the apical surface of the GroEL ring, thereby capping the opening of the GroEL channel. This Thermus thermophilus (strain ATCC BAA-163 / DSM 7039 / HB27) protein is Co-chaperonin GroES.